A 380-amino-acid chain; its full sequence is Cytochrome b (380 aa).

4 helical membrane passes run 33-53 (FGSLLGLCLATQILTGLFLAM), 77-98 (WLIRNMHANGASFFFICIYLHI), 113-133 (WNVGVALFLLTMMTAFVGYVL), and 178-198 (FFAFHFLFPFVIAALTAIHLL). Residues histidine 83 and histidine 97 each contribute to the heme b site. Residues histidine 182 and histidine 196 each coordinate heme b. Residue histidine 201 participates in a ubiquinone binding. The next 4 helical transmembrane spans lie at 226 to 246 (YKDLLGFATLMVTLTSLALFS), 288 to 308 (LGGVLALLSSILILTAVPALH), 320 to 340 (ITQLLFWTLVAAVLVLTWIGG), and 347 to 367 (FIIIGQIASLLYFMLFLTLIP).

This sequence belongs to the cytochrome b family. The cytochrome bc1 complex contains 3 respiratory subunits (MT-CYB, CYC1 and UQCRFS1), 2 core proteins (UQCRC1 and UQCRC2) and probably 6 low-molecular weight proteins. The cofactor is heme b.

The protein localises to the mitochondrion inner membrane. In terms of biological role, component of the ubiquinol-cytochrome c reductase complex (complex III or cytochrome b-c1 complex) that is part of the mitochondrial respiratory chain. The b-c1 complex mediates electron transfer from ubiquinol to cytochrome c. Contributes to the generation of a proton gradient across the mitochondrial membrane that is then used for ATP synthesis. This is Cytochrome b (mt-cyb) from Percopsis transmontana (Sand roller).